The following is a 301-amino-acid chain: tRNA (guanine-N(7)-)-methyltransferase (301 aa).

Positions 1-26 (MSETPDSPRPVTPGSQASFGTYGGRP) are disordered. Residues Glu-85, Glu-110, Asn-137, and Asp-160 each contribute to the S-adenosyl-L-methionine site. Asp-160 is an active-site residue. Substrate is bound by residues Lys-164 and Asp-196. Residues 244 to 270 (APVREGRAPVSTEHTGPNEGVDEEGGW) are disordered. Substrate is bound at residue 280–283 (TSFE).

The protein belongs to the class I-like SAM-binding methyltransferase superfamily. TrmB family.

The catalysed reaction is guanosine(46) in tRNA + S-adenosyl-L-methionine = N(7)-methylguanosine(46) in tRNA + S-adenosyl-L-homocysteine. It participates in tRNA modification; N(7)-methylguanine-tRNA biosynthesis. Catalyzes the formation of N(7)-methylguanine at position 46 (m7G46) in tRNA. In Paenarthrobacter aurescens (strain TC1), this protein is tRNA (guanine-N(7)-)-methyltransferase.